Consider the following 601-residue polypeptide: Protein FREE1 (601 aa).

Residues 1–240 (MQQGDYNSYY…SGEYPAFEDS (240 aa)) are disordered. The segment covering 21 to 35 (TPNPNPNPNPSPPAP) has biased composition (pro residues). 2 stretches are compositionally biased toward polar residues: residues 63–79 (DYSN…QNSE) and 125–155 (LSSY…QHQT). The segment covering 161 to 175 (APPPSSAPAPNPNPA) has biased composition (pro residues). Positions 176–197 (PYSSSLYSAPPYSSGGSSIPPS) are enriched in low complexity. Positions 214 to 231 (NRSRSDLGSDLYGKRSDS) are enriched in basic and acidic residues. A Phosphoserine modification is found at serine 218. A nuclear export signal region spans residues 338-344 (LDGLRML). Residues 455–515 (DEAVSKCTSC…VCDRCMAEVS (61 aa)) form an FYVE-type zinc finger. Residues cysteine 461, cysteine 464, cysteine 477, cysteine 480, cysteine 485, cysteine 488, cysteine 507, and cysteine 510 each contribute to the Zn(2+) site. The stretch at 527–552 (RNVSLQSHEDLARKLQEEMERNRKSS) forms a coiled coil. A phosphoserine mark is found at serine 530 and serine 533. The tract at residues 542-561 (QEEMERNRKSSSGLREGSGR) is disordered.

In terms of assembly, part of the ESCRT-I complex. Interacts with VPS23A and VPS23B, but not with VPS28 or VPS37. Interacts with IRT1. Interacts with SH3P2. Interacts with SH3P3, but not with SH3P1. Interacts (via N-terminus) with PYL4 and PYR3. Interacts (via C-terminus) with SNRK2D/SNRK2.2, SNRK2I/SNRK2.3, ABF4 and ABI5. Interacts with SINAT1, SINAT2, SINAT3 and SINAT4. Interacts with SINAT5. Component of a phosphoinositide 3-kinase (PI3K) complex containing ATG6, SH3P2 and FREE1. In terms of processing, phosphorylated at Ser-530 and Ser-533 by SNRK2D/SNRK2.2 and SNRK2I/SNRK2.3 in response to abscisic acid (ABA). Phosphorylation is necessary for ABA-induced FREE1 nuclear import. Post-translationally, ubiquitinated by SINAT1, SINAT2, SINAT3 and SINAT4 for subsequent proteasomal degradation. Ubiquitous. Lowest expression in mature seeds.

The protein localises to the cytoplasm. The protein resides in the prevacuolar compartment membrane. Its subcellular location is the late endosome. It is found in the endosome. It localises to the multivesicular body. The protein localises to the nucleus. Functionally, endosomal sorting complex required for transport (ESCRT) component regulating multivesicular body (MVB) protein sorting and plant growth. Required for the formation of intra-luminal vesicles (ILVs)in MVBs. Binds to phosphatidylinositol-3-phosphate (PI3P) and ubiquitin. Controls IRT1 recycling to the plasma membrane and impacts the polar delivery of this transporter to the outer plasma membrane domain. Regulates ubiquitin-dependent membrane protein degradation, vacuolar transport, autophagy, and vacuole biogenesis. ESCRT component that binds ubiquitin and regulates vacuolar sorting of proteins. Attenuates abscisic acid (ABA) signaling through RSL1-triggered degradation of the ABA receptors PYR1 and PYL4. Interacts with PYL4 and PYR1, and delivers the ubiquitinated ABA receptors as cargo to the vacuolar degradation pathway. In response to ABA, is phosphorylated by SnRK2 kinases which mediate FREE1 nuclear import. In the nucleus, interacts with the ABA-responsive transcription factors ABF4 and ABI5 to reduce their ability to bind to their cis-regulatory sequences of downstream genes, thus leading to transcriptional inhibition of ABA signaling pathway. Negatively regulates salt stress tolerance via a negative feedback loop involving ABA signaling pathway. The polypeptide is Protein FREE1 (Arabidopsis thaliana (Mouse-ear cress)).